A 152-amino-acid polypeptide reads, in one-letter code: 1,4-dihydroxy-2-naphthoyl-CoA hydrolase (152 aa).

D20 is an active-site residue.

This sequence belongs to the 4-hydroxybenzoyl-CoA thioesterase family. DHNA-CoA hydrolase subfamily.

The catalysed reaction is 1,4-dihydroxy-2-naphthoyl-CoA + H2O = 1,4-dihydroxy-2-naphthoate + CoA + H(+). The protein operates within cofactor biosynthesis; phylloquinone biosynthesis. It participates in quinol/quinone metabolism; 1,4-dihydroxy-2-naphthoate biosynthesis; 1,4-dihydroxy-2-naphthoate from chorismate: step 7/7. Catalyzes the hydrolysis of 1,4-dihydroxy-2-naphthoyl-CoA (DHNA-CoA) to 1,4-dihydroxy-2-naphthoate (DHNA), a reaction involved in phylloquinone (vitamin K1) biosynthesis. This is 1,4-dihydroxy-2-naphthoyl-CoA hydrolase from Parasynechococcus marenigrum (strain WH8102).